The primary structure comprises 470 residues: uncharacterized protein (470 aa).

The first 24 residues, 1-24 (MKKLVGSLAAISVLSATGFSYVGY), serve as a signal peptide directing secretion.

This is an uncharacterized protein from Mycoplasma capricolum subsp. capricolum (strain California kid / ATCC 27343 / NCTC 10154).